A 515-amino-acid polypeptide reads, in one-letter code: Protein translocase subunit SecD (515 aa).

Residues 6 to 26 traverse the membrane as a helical segment; the sequence is LYSLIFIIILTAFAVWVDLPG. The disordered stretch occupies residues 141-186; that stretch reads AITNGNQNQNSTKNGTPTPGTTPTPESTPQANQTPVAANVTPTPED. Positions 150 to 169 are enriched in low complexity; sequence NSTKNGTPTPGTTPTPESTP. Residues 170–186 are compositionally biased toward polar residues; that stretch reads QANQTPVAANVTPTPED. 5 consecutive transmembrane segments (helical) span residues 322-342, 344-364, 367-387, 427-447, and 450-470; these read RSIR…ILYY, LPGF…FALF, IPVT…GMAV, ISTL…GASV, and GFAI…IFVT.

This sequence belongs to the SecD/SecF family. SecD subfamily. As to quaternary structure, forms a complex with SecF. Part of the essential Sec protein translocation apparatus which comprises SecA, SecYEG and auxiliary proteins SecDF. Other proteins may also be involved.

Its subcellular location is the cell membrane. In terms of biological role, part of the Sec protein translocase complex. Interacts with the SecYEG preprotein conducting channel. SecDF uses the proton motive force (PMF) to complete protein translocation after the ATP-dependent function of SecA. The polypeptide is Protein translocase subunit SecD (Thermobaculum terrenum (strain ATCC BAA-798 / CCMEE 7001 / YNP1)).